Here is a 1324-residue protein sequence, read N- to C-terminus: Tetratricopeptide repeat protein 21 homolog (1324 aa).

TPR repeat units follow at residues 58 to 91, 414 to 446, 582 to 615, 669 to 702, 737 to 770, 772 to 804, 806 to 837, 847 to 880, 894 to 927, 929 to 961, 963 to 995, 997 to 1029, 1033 to 1066, 1205 to 1238, 1240 to 1272, and 1274 to 1307; these read PALA…NDVA, SPLY…LVEM, SLYH…PRKE, DQLV…QSNF, PGSY…QSKD, QLAE…YKDK, MRLK…DPEP, IQFL…HSRI, ARIC…HETD, KANL…DPHN, EANS…NPQH, HALS…NPRC, SGYN…AAGW, EKCW…NCNC, KAFE…TKER, and PGFG…NPQY.

Belongs to the TTC21 family. In terms of assembly, component of the IFT complex A (IFT-A) composed of at least che-11, daf-10, dyf-2, ift-139, ift-43 and ifta-1. Expressed in ciliated sensory neurons in the head and tail.

Its subcellular location is the cell projection. The protein resides in the cilium. It is found in the cytoplasm. The protein localises to the cytoskeleton. It localises to the cilium basal body. Its subcellular location is the dendrite. Its function is as follows. Component of the IFT complex A (IFT-A), a complex required for retrograde ciliary transport. In particular, may act redundantly with the intraflagellar transport protein ift-43 to regulate the transport of specific ciliary cargo proteins such as che-3 which are related to motility. Functions in cilia biogenesis. The polypeptide is Tetratricopeptide repeat protein 21 homolog (Caenorhabditis elegans).